Here is a 156-residue protein sequence, read N- to C-terminus: Small ribosomal subunit protein uS7 (156 aa).

Belongs to the universal ribosomal protein uS7 family. In terms of assembly, part of the 30S ribosomal subunit. Contacts proteins S9 and S11.

In terms of biological role, one of the primary rRNA binding proteins, it binds directly to 16S rRNA where it nucleates assembly of the head domain of the 30S subunit. Is located at the subunit interface close to the decoding center, probably blocks exit of the E-site tRNA. In Desulforudis audaxviator (strain MP104C), this protein is Small ribosomal subunit protein uS7.